We begin with the raw amino-acid sequence, 355 residues long: DNA polymerase IV (355 aa).

One can recognise a UmuC domain in the interval 7-188; the sequence is IIHIDMDCFY…LPVRKLFGVG (182 aa). 2 residues coordinate Mg(2+): Asp11 and Asp106. Glu107 is an active-site residue.

The protein belongs to the DNA polymerase type-Y family. Monomer. The cofactor is Mg(2+).

It is found in the cytoplasm. The catalysed reaction is DNA(n) + a 2'-deoxyribonucleoside 5'-triphosphate = DNA(n+1) + diphosphate. Functionally, poorly processive, error-prone DNA polymerase involved in untargeted mutagenesis. Copies undamaged DNA at stalled replication forks, which arise in vivo from mismatched or misaligned primer ends. These misaligned primers can be extended by PolIV. Exhibits no 3'-5' exonuclease (proofreading) activity. May be involved in translesional synthesis, in conjunction with the beta clamp from PolIII. The polypeptide is DNA polymerase IV (Legionella pneumophila (strain Paris)).